Consider the following 1112-residue polypeptide: Mediator of RNA polymerase II transcription subunit 14 (1112 aa).

Disordered stretches follow at residues 1–76 (MPGV…INES), 120–141 (SPHG…QSPE), and 1088–1112 (TNSA…ITID). Residues 20–39 (SPDNVSSTPFPQERVNQSGD) show a composition bias toward polar residues. Residues 64 to 73 (IETHTGKDGI) are compositionally biased toward basic and acidic residues. A compositionally biased stretch (polar residues) spans 1088 to 1099 (TNSAGARSSQQC).

Belongs to the Mediator complex subunit 14 family. As to quaternary structure, component of the Mediator complex.

It is found in the nucleus. Its function is as follows. Component of the Mediator complex, a coactivator involved in the regulated transcription of nearly all RNA polymerase II-dependent genes. Mediator functions as a bridge to convey information from gene-specific regulatory proteins to the basal RNA polymerase II transcription machinery. Mediator is recruited to promoters by direct interactions with regulatory proteins and serves as a scaffold for the assembly of a functional preinitiation complex with RNA polymerase II and the general transcription factors. The chain is Mediator of RNA polymerase II transcription subunit 14 (rgr1) from Aspergillus clavatus (strain ATCC 1007 / CBS 513.65 / DSM 816 / NCTC 3887 / NRRL 1 / QM 1276 / 107).